Here is a 300-residue protein sequence, read N- to C-terminus: Ribosomal protein bS6--L-glutamate ligase (300 aa).

Residues 104 to 287 (MQLLARQGID…IAGKMIRWIE (184 aa)) enclose the ATP-grasp domain. Residues Lys-141, 178–179 (EY), Asp-187, and 211–213 (RSN) each bind ATP. Residues Asp-248, Glu-260, and Asn-262 each contribute to the Mg(2+) site. Mn(2+) is bound by residues Asp-248, Glu-260, and Asn-262.

This sequence belongs to the RimK family. Mg(2+) serves as cofactor. The cofactor is Mn(2+).

Functionally, an L-glutamate ligase that catalyzes the ATP-dependent post-translational addition of glutamate residues to the C-terminus of ribosomal protein bS6 (RpsF). Is also able to catalyze the synthesis of poly-alpha-glutamate in vitro, via ATP hydrolysis from unprotected glutamate as substrate. The number of glutamate residues added to either RpsF or to poly-alpha-glutamate changes with pH. This Shigella boydii serotype 18 (strain CDC 3083-94 / BS512) protein is Ribosomal protein bS6--L-glutamate ligase.